The chain runs to 184 residues: Holliday junction branch migration complex subunit RuvA (184 aa).

The segment at 1-64 is domain I; it reads MIVAVEGIIT…EDADLLYGFL (64 aa). Positions 65 to 145 are domain II; sequence DEKEKRMFEM…ANDGEQYKIE (81 aa). Residue E145 is a region of interest, flexible linker. Residues 145–184 form a domain III region; sequence ETISALENLGFKRDKINKILLNCKSTNTADLIKEALKKLA.

Belongs to the RuvA family. In terms of assembly, homotetramer. Forms an RuvA(8)-RuvB(12)-Holliday junction (HJ) complex. HJ DNA is sandwiched between 2 RuvA tetramers; dsDNA enters through RuvA and exits via RuvB. An RuvB hexamer assembles on each DNA strand where it exits the tetramer. Each RuvB hexamer is contacted by two RuvA subunits (via domain III) on 2 adjacent RuvB subunits; this complex drives branch migration. In the full resolvosome a probable DNA-RuvA(4)-RuvB(12)-RuvC(2) complex forms which resolves the HJ.

Its subcellular location is the cytoplasm. The RuvA-RuvB-RuvC complex processes Holliday junction (HJ) DNA during genetic recombination and DNA repair, while the RuvA-RuvB complex plays an important role in the rescue of blocked DNA replication forks via replication fork reversal (RFR). RuvA specifically binds to HJ cruciform DNA, conferring on it an open structure. The RuvB hexamer acts as an ATP-dependent pump, pulling dsDNA into and through the RuvAB complex. HJ branch migration allows RuvC to scan DNA until it finds its consensus sequence, where it cleaves and resolves the cruciform DNA. The sequence is that of Holliday junction branch migration complex subunit RuvA from Campylobacter hominis (strain ATCC BAA-381 / DSM 21671 / CCUG 45161 / LMG 19568 / NCTC 13146 / CH001A).